A 796-amino-acid chain; its full sequence is Nuclear GTPase SLIP-GC (796 aa).

Basic and acidic residues predominate over residues 1-22; it reads MAETKDVFGQEPHPVEDDLYKE. The disordered stretch occupies residues 1 to 35; the sequence is MAETKDVFGQEPHPVEDDLYKERTRKRRKSDRDQR. Residue 107 to 114 participates in GTP binding; that stretch reads GSTGAGKS. Coiled-coil stretches lie at residues 158–185 and 745–775; these read SDQE…EEAD and KELA…RLRK.

In terms of tissue distribution, expressed in germinal center B-cell and in lymphomas derived from germinal center B-cell.

It localises to the nucleus speckle. Its function is as follows. Nuclear GTPase found in germinal center B-cells, where it may inhibit function of the activation-induced cytidine deaminase AICDA. Reduces somatic hypermutation in B-cells which may enhance genome stability. This Homo sapiens (Human) protein is Nuclear GTPase SLIP-GC (NUGGC).